Here is a 769-residue protein sequence, read N- to C-terminus: 4-hydroxybenzoyl-CoA reductase subunit alpha (769 aa).

Mo-molybdopterin cytosine dinucleotide-binding positions include Gln-214, 244–245, 522–526, 650–655, and 722–725; these read GF, SSRVT, VGKALN, and KEAS.

The protein belongs to the xanthine dehydrogenase family. In terms of assembly, heterohexamer of two alpha, two beta and two gamma subunits. It depends on Mo-molybdopterin cytosine dinucleotide as a cofactor. Post-translationally, the N-terminus is blocked.

It carries out the reaction oxidized 2[4Fe-4S]-[ferredoxin] + benzoyl-CoA + H2O = 4-hydroxybenzoyl-CoA + reduced 2[4Fe-4S]-[ferredoxin] + 2 H(+). With respect to regulation, inactivated by low concentrations of cyanide in vitro. In terms of biological role, component of a complex that catalyzes the reductive dehydroxylation of 4-hydroxybenzoyl-CoA to benzoyl-CoA. Reaction is not reversible. Is a key enzyme in the anaerobic degradation of phenolic compounds. The protein is 4-hydroxybenzoyl-CoA reductase subunit alpha (hcrA) of Thauera aromatica.